A 259-amino-acid chain; its full sequence is Hydroxyethylthiazole kinase (259 aa).

Met-50 serves as a coordination point for substrate. Positions 122 and 168 each coordinate ATP. Position 195 (Gly-195) interacts with substrate.

Belongs to the Thz kinase family. Mg(2+) is required as a cofactor.

It carries out the reaction 5-(2-hydroxyethyl)-4-methylthiazole + ATP = 4-methyl-5-(2-phosphooxyethyl)-thiazole + ADP + H(+). Its pathway is cofactor biosynthesis; thiamine diphosphate biosynthesis; 4-methyl-5-(2-phosphoethyl)-thiazole from 5-(2-hydroxyethyl)-4-methylthiazole: step 1/1. Its function is as follows. Catalyzes the phosphorylation of the hydroxyl group of 4-methyl-5-beta-hydroxyethylthiazole (THZ). This Escherichia coli O127:H6 (strain E2348/69 / EPEC) protein is Hydroxyethylthiazole kinase.